The following is a 304-amino-acid chain: N-acetylmuramic acid 6-phosphate etherase (304 aa).

The SIS domain occupies 62–225; it reads IVTAFRQGGR…TTASMILMGK (164 aa). Glutamate 90 functions as the Proton donor in the catalytic mechanism. Glutamate 121 is an active-site residue.

Belongs to the GCKR-like family. MurNAc-6-P etherase subfamily. In terms of assembly, homodimer.

The enzyme catalyses N-acetyl-D-muramate 6-phosphate + H2O = N-acetyl-D-glucosamine 6-phosphate + (R)-lactate. It participates in amino-sugar metabolism; 1,6-anhydro-N-acetylmuramate degradation. Its pathway is amino-sugar metabolism; N-acetylmuramate degradation. The protein operates within cell wall biogenesis; peptidoglycan recycling. Specifically catalyzes the cleavage of the D-lactyl ether substituent of MurNAc 6-phosphate, producing GlcNAc 6-phosphate and D-lactate. Together with AnmK, is also required for the utilization of anhydro-N-acetylmuramic acid (anhMurNAc) either imported from the medium or derived from its own cell wall murein, and thus plays a role in cell wall recycling. The polypeptide is N-acetylmuramic acid 6-phosphate etherase (Actinobacillus succinogenes (strain ATCC 55618 / DSM 22257 / CCUG 43843 / 130Z)).